The following is a 484-amino-acid chain: tRNA sulfurtransferase (484 aa).

Residues 63-167 enclose the THUMP domain; it reads DVFADRLACI…QDKLYMVERR (105 aa). ATP is bound by residues 185-186, K267, G289, and Q298; that span reads LI. C346 and C458 are disulfide-bonded. A Rhodanese domain is found at 406–484; that stretch reads VASGEIIIDV…GYTNVKVYRP (79 aa). The active-site Cysteine persulfide intermediate is the C458.

This sequence belongs to the ThiI family.

The protein localises to the cytoplasm. It catalyses the reaction [ThiI sulfur-carrier protein]-S-sulfanyl-L-cysteine + a uridine in tRNA + 2 reduced [2Fe-2S]-[ferredoxin] + ATP + H(+) = [ThiI sulfur-carrier protein]-L-cysteine + a 4-thiouridine in tRNA + 2 oxidized [2Fe-2S]-[ferredoxin] + AMP + diphosphate. The catalysed reaction is [ThiS sulfur-carrier protein]-C-terminal Gly-Gly-AMP + S-sulfanyl-L-cysteinyl-[cysteine desulfurase] + AH2 = [ThiS sulfur-carrier protein]-C-terminal-Gly-aminoethanethioate + L-cysteinyl-[cysteine desulfurase] + A + AMP + 2 H(+). It participates in cofactor biosynthesis; thiamine diphosphate biosynthesis. Catalyzes the ATP-dependent transfer of a sulfur to tRNA to produce 4-thiouridine in position 8 of tRNAs, which functions as a near-UV photosensor. Also catalyzes the transfer of sulfur to the sulfur carrier protein ThiS, forming ThiS-thiocarboxylate. This is a step in the synthesis of thiazole, in the thiamine biosynthesis pathway. The sulfur is donated as persulfide by IscS. The protein is tRNA sulfurtransferase of Shewanella frigidimarina (strain NCIMB 400).